Consider the following 141-residue polypeptide: Large ribosomal subunit protein uL11 (141 aa).

It belongs to the universal ribosomal protein uL11 family. Part of the ribosomal stalk of the 50S ribosomal subunit. Interacts with L10 and the large rRNA to form the base of the stalk. L10 forms an elongated spine to which L12 dimers bind in a sequential fashion forming a multimeric L10(L12)X complex. Post-translationally, one or more lysine residues are methylated.

In terms of biological role, forms part of the ribosomal stalk which helps the ribosome interact with GTP-bound translation factors. The protein is Large ribosomal subunit protein uL11 of Clostridium novyi (strain NT).